A 333-amino-acid polypeptide reads, in one-letter code: Serine racemase (333 aa).

Residue Glu-13 participates in Mg(2+) binding. Ser-31, Ser-32, Ile-33, Lys-51, and Thr-52 together coordinate ATP. The active-site Proton acceptor is the Lys-56. Lys-56 bears the N6-(pyridoxal phosphate)lysine mark. Pro-69 serves as a coordination point for Ca(2+). Thr-71 bears the Phosphothreonine mark. Thr-81 serves as a coordination point for Ca(2+). The active-site Proton acceptor is Ser-84. Asn-86 is a binding site for pyridoxal 5'-phosphate. Gln-89 serves as a coordination point for ATP. An S-nitrosocysteine modification is found at Cys-113. Tyr-121 is a binding site for ATP. Pyridoxal 5'-phosphate is bound at residue Asn-154. Asp-178 provides a ligand contact to Mg(2+). Positions 185, 186, 187, 188, and 189 each coordinate pyridoxal 5'-phosphate. Residues Glu-210, Ala-214, Asp-216, and Asn-247 each coordinate Mg(2+). 4 residues coordinate Ca(2+): Glu-210, Ala-214, Asp-216, and Asn-247. Residues Glu-210, Ala-214, and Asp-216 each coordinate Mn(2+). Lys-279 contributes to the ATP binding site. Ser-313 is a pyridoxal 5'-phosphate binding site. An ATP-binding site is contributed by Asn-316.

It belongs to the serine/threonine dehydratase family. In terms of assembly, homodimer. Mg(2+) is required as a cofactor. The cofactor is Mn(2+). Ca(2+) serves as cofactor. It depends on pyridoxal 5'-phosphate as a cofactor. In terms of processing, S-nitrosylated, leading to decrease the enzyme activity. As to expression, expressed in the cerebellum and frontal cortex (at protein level).

The enzyme catalyses L-serine = D-serine. It carries out the reaction D-serine = pyruvate + NH4(+). It catalyses the reaction L-serine = pyruvate + NH4(+). With respect to regulation, allosterically activated by magnesium, and possibly also other divalent metal cations. Allosterically activated by ATP, ADP or GTP. Competitively inhibited by malonate. Catalyzes the synthesis of D-serine from L-serine. D-serine is a key coagonist with glutamate at NMDA receptors. Has dehydratase activity towards both L-serine and D-serine. This is Serine racemase (Srr) from Rattus norvegicus (Rat).